Reading from the N-terminus, the 447-residue chain is Ribosomal protein uS12 methylthiotransferase RimO (447 aa).

The 111-residue stretch at 4–114 (PKVGFVSLGC…VMEAVHEYVP (111 aa)) folds into the MTTase N-terminal domain. The [4Fe-4S] cluster site is built by Cys13, Cys49, Cys78, Cys147, Cys151, and Cys154. The 238-residue stretch at 133 to 370 (LTPKHYAYLK…MQVQQEISAA (238 aa)) folds into the Radical SAM core domain. The region spanning 373-443 (QKRIGQTMTV…EYDLFAKLIQ (71 aa)) is the TRAM domain.

It belongs to the methylthiotransferase family. RimO subfamily. [4Fe-4S] cluster serves as cofactor.

It localises to the cytoplasm. The catalysed reaction is L-aspartate(89)-[ribosomal protein uS12]-hydrogen + (sulfur carrier)-SH + AH2 + 2 S-adenosyl-L-methionine = 3-methylsulfanyl-L-aspartate(89)-[ribosomal protein uS12]-hydrogen + (sulfur carrier)-H + 5'-deoxyadenosine + L-methionine + A + S-adenosyl-L-homocysteine + 2 H(+). Functionally, catalyzes the methylthiolation of an aspartic acid residue of ribosomal protein uS12. In Acinetobacter baylyi (strain ATCC 33305 / BD413 / ADP1), this protein is Ribosomal protein uS12 methylthiotransferase RimO.